The chain runs to 114 residues: Probable 4-amino-4-deoxy-L-arabinose-phosphoundecaprenol flippase subunit ArnE (114 aa).

Helical transmembrane passes span 41 to 61 (PWLI…IYLL), 64 to 84 (LPLS…LVGS), and 94 to 114 (YHNW…GGLL). The EamA domain maps to 43–112 (LIASVAALGC…IIVGALLLGG (70 aa)).

This sequence belongs to the ArnE family. Heterodimer of ArnE and ArnF.

The protein resides in the cell inner membrane. The protein operates within bacterial outer membrane biogenesis; lipopolysaccharide biosynthesis. In terms of biological role, translocates 4-amino-4-deoxy-L-arabinose-phosphoundecaprenol (alpha-L-Ara4N-phosphoundecaprenol) from the cytoplasmic to the periplasmic side of the inner membrane. This Aeromonas hydrophila subsp. hydrophila (strain ATCC 7966 / DSM 30187 / BCRC 13018 / CCUG 14551 / JCM 1027 / KCTC 2358 / NCIMB 9240 / NCTC 8049) protein is Probable 4-amino-4-deoxy-L-arabinose-phosphoundecaprenol flippase subunit ArnE.